The chain runs to 68 residues: Alpha-conotoxin-like Lp1.2 (68 aa).

An N-terminal signal peptide occupies residues 1 to 21 (MGMRMMFTVFLLVVLATTVVS). A propeptide spanning residues 22–48 (FTSDRAFDGRNAAASDKASDLISLAVR) is cleaved from the precursor. 2 disulfides stabilise this stretch: Cys-50–Cys-56 and Cys-51–Cys-64. A ser-Xaa-Pro motif, crucial for potent interaction with nAChR region spans residues 52 to 54 (SHP). Cys-64 bears the Cysteine amide mark. A propeptide spanning residues 65-68 (GGKR) is cleaved from the precursor.

The protein belongs to the conotoxin A superfamily. In terms of tissue distribution, expressed by the venom duct.

The protein resides in the secreted. Its function is as follows. Alpha-conotoxins act on postsynaptic membranes, they bind to the nicotinic acetylcholine receptors (nAChR) and thus inhibit them. The chain is Alpha-conotoxin-like Lp1.2 from Conus leopardus (Leopard cone).